The chain runs to 166 residues: 2-C-methyl-D-erythritol 2,4-cyclodiphosphate synthase (166 aa).

Residues Asp17 and His19 each coordinate a divalent metal cation. Residues 17–19 (DSH) and 43–44 (HS) each bind 4-CDP-2-C-methyl-D-erythritol 2-phosphate. Position 51 (His51) interacts with a divalent metal cation. 4-CDP-2-C-methyl-D-erythritol 2-phosphate contacts are provided by residues 65 to 67 (DIG), 109 to 115 (AQKPKMA), and Arg151.

Belongs to the IspF family. In terms of assembly, homotrimer. A divalent metal cation is required as a cofactor.

The catalysed reaction is 4-CDP-2-C-methyl-D-erythritol 2-phosphate = 2-C-methyl-D-erythritol 2,4-cyclic diphosphate + CMP. The protein operates within isoprenoid biosynthesis; isopentenyl diphosphate biosynthesis via DXP pathway; isopentenyl diphosphate from 1-deoxy-D-xylulose 5-phosphate: step 4/6. Functionally, involved in the biosynthesis of isopentenyl diphosphate (IPP) and dimethylallyl diphosphate (DMAPP), two major building blocks of isoprenoid compounds. Catalyzes the conversion of 4-diphosphocytidyl-2-C-methyl-D-erythritol 2-phosphate (CDP-ME2P) to 2-C-methyl-D-erythritol 2,4-cyclodiphosphate (ME-CPP) with a corresponding release of cytidine 5-monophosphate (CMP). This chain is 2-C-methyl-D-erythritol 2,4-cyclodiphosphate synthase, found in Rhodopirellula baltica (strain DSM 10527 / NCIMB 13988 / SH1).